We begin with the raw amino-acid sequence, 461 residues long: Putative cytochrome P450 132 (461 aa).

Residue C409 participates in heme binding.

It belongs to the cytochrome P450 family. Heme is required as a cofactor.

This chain is Putative cytochrome P450 132 (cyp132), found in Mycobacterium tuberculosis (strain ATCC 25618 / H37Rv).